Consider the following 1242-residue polypeptide: MFPYPTLNYPPMAPVNPMAYRDPNPPRRRWRPFRPPLAAQIEDLRRSIANLTFKQRAPNPPAGPPAKRKKPAPKPKPAAPKKKRQPPPAKKQKRKQKPGKRQRMCMKLESDKTFPIMLNGQVNGYACVVGGRVFKPLHVEGKIDNEQLAAIKLKKASIYDLEYGDVPQCMKSDTLQYTSEKPPGFYNWHHGAVQYENNRFTVPRGVGGKGDSGRPILDNRGRVVAIVLGGANEGSRTALSVVTWNQKGVTVKDTPEGSEPWSLTTVMCVLANITFPCDQPPCMPCCYEKNPHETLSMLEQNYDSQAYDLLLDAAVKCNGRRTRRDLETHFTQYKLARPYIADCSNCGHGRCDSPIAIEDIRGDAHAGYIRIQTSAMFGLKSDGVDLAYMSFMNGKTLKAIKIEHLYARTSAPCSLVSYHGYYILAQCPPGDTVTVGFQDGAIKHMCTIAHKVEFKPVGREKYRHPPEHGVELPCTKYTHKRADQGHYVEMHQPGLVADHSLLSMSSTKVKITVPSGSQVKYYCKCPDVKEGTTGSDYTTACTDLKQCRAYLIDNKKWVYNSGKLPRGEGETFKGKLHVPFVPVTSKCTATLAPEPLVEHKHRSLVLHLHPEHPTLLTTRALGSNARPTRQWIEQPTTVNFTVTGEGFEYTWGNHPPKRVWAQESGEGNPHGWPHEIVIYYYNRYPMTTVIGLCTCVAIIMVSCVTSVWLLCRTRNLCITPYRLAPNAQVPILLAVLCCVKPTRADDTLQVLNYLWNNNQNFFWMQTLIPLAALIVCMRMLRCLLCCGPAFLLVCGALGAAAYEHAAVMPNKVGIPYKALVERPGYAPVHLQIQLVTTKIIPSANLEYITCKYKTKVPSPVVKCCGSTQCSAKSLPDYQCQVFTGVYPFMWGGAYCFCDTENTQMSEVYIERAEECSVDQAKAYKVHTGTVQAVVNITYGSVSWRSADVYVNGETPAKIGDAKLTIGPLSSAWSPFDSKVVVYGHEVYNYDFPEYGTGKAGSFGDLQSRTLTSNDLYANTNLKLQRPQPGVVHTPYTQAPSGFERWKKDRGAPLNDIAPFGCTIALDPLRAENCAVGNIPLSIDIPDAAFTRIAETPTVSDLECKVTECTYASDFGGIATISYKASKAGNCPIHSPSGIAVIKENDVTLADSGAFTFHFSTASIHPAFKMQVCTSVVTCKGDCKPPKDHIVDYPAQHTETYTSAVSATAWSWLKVLVGSTSAFIVLGLIATAVVALVLFTHRH.

Positions 1-36 (MFPYPTLNYPPMAPVNPMAYRDPNPPRRRWRPFRPP) are necessary for nucleocapsid assembly and virus assembly. The interval 1–104 (MFPYPTLNYP…KQKPGKRQRM (104 aa)) is disordered. Positions 37–70 (LAAQIEDLRRSIANLTFKQRAPNPPAGPPAKRKK) are host transcription inhibition. The short motif at 44–51 (LRRSIANL) is the Supraphysiological nuclear export signal element. Basic residues predominate over residues 66 to 104 (AKRKKPAPKPKPAAPKKKRQPPPAKKQKRKQKPGKRQRM). A Nuclear localization signal motif is present at residues 67–70 (KRKK). Positions 83–113 (KRQPPPAKKQKRKQKPGKRQRMCMKLESDKT) are binding to the viral RNA. Residues 98 to 112 (PGKRQRMCMKLESDK) form a ribosome-binding region. Serine 110 carries the phosphoserine modification. A Peptidase S3 domain is found at 112–261 (KTFPIMLNGQ…KDTPEGSEPW (150 aa)). A Phosphothreonine modification is found at threonine 113. Catalysis depends on charge relay system residues histidine 138, aspartate 160, and serine 212. The tract at residues 262 to 273 (SLTTVMCVLANI) is functions as an uncleaved signal peptide for the precursor of protein E3/E2. The N-linked (GlcNAc...) asparagine; by host glycan is linked to asparagine 272. Over 325–688 (DLETHFTQYK…YYYNRYPMTT (364 aa)) the chain is Extracellular. The chain crosses the membrane as a helical span at residues 689–709 (VIGLCTCVAIIMVSCVTSVWL). At 710–744 (LCRTRNLCITPYRLAPNAQVPILLAVLCCVKPTRA) the chain is on the cytoplasmic side. 3 S-palmitoyl cysteine; by host lipidation sites follow: cysteine 717, cysteine 737, and cysteine 738. A transient transmembrane before p62-6K protein processing region spans residues 717–737 (CITPYRLAPNAQVPILLAVLC). Topologically, residues 745–759 (DDTLQVLNYLWNNNQ) are extracellular. 2 consecutive transmembrane segments (helical) span residues 760-780 (NFFWMQTLIPLAALIVCMRML) and 781-801 (RCLLCCGPAFLLVCGALGAAA). Topologically, residues 802-1218 (YEHAAVMPNK…WSWLKVLVGS (417 aa)) are extracellular. 8 disulfides stabilise this stretch: cysteine 850–cysteine 915, cysteine 863–cysteine 895, cysteine 864–cysteine 897, cysteine 869–cysteine 879, cysteine 1061–cysteine 1073, cysteine 1103–cysteine 1178, cysteine 1108–cysteine 1182, and cysteine 1130–cysteine 1172. An E1 fusion peptide loop region spans residues 885-902 (VYPFMWGGAYCFCDTENT). The helical transmembrane segment at 1219–1239 (TSAFIVLGLIATAVVALVLFT) threads the bilayer. Residues 1240 to 1242 (HRH) lie on the Cytoplasmic side of the membrane.

In terms of assembly, part of a tetrameric complex composed of host CRM1, host importin alpha/beta dimer and the viral capsid; this complex blocks the receptor-mediated transport through the nuclear pore. Interacts with host phosphatase PPP1CA; this interaction dephosphorylates the capsid protein, which increases its ability to bind to the viral genome. Interacts with host karyopherin KPNA4; this interaction allows the nuclear import of the viral capsid protein. Interacts with spike glycoprotein E2. Interacts with host IRAK1; the interaction leads to inhibition of IRAK1-dependent signaling. The precursor of protein E3/E2 and E1 form a heterodimer shortly after synthesis. As to quaternary structure, the precursor of protein E3/E2 and E1 form a heterodimer shortly after synthesis. Processing of the precursor of protein E3/E2 into E2 and E3 results in a heterodimer of the spike glycoproteins E2 and E1. Spike at virion surface are constituted of three E2-E1 heterodimers. After target cell attachment and endocytosis, E1 change conformation to form homotrimers. Interacts with 6K protein. In terms of assembly, processing of the precursor of protein E3/E2 into E2 and E3 results in a heterodimer of the spike glycoproteins E2 and E1. Spike at virion surface are constituted of three E2-E1 heterodimers. Interacts with 6K protein. Interacts with spike glycoprotein E1. Interacts with spike glycoprotein E2. Post-translationally, structural polyprotein: Specific enzymatic cleavages in vivo yield mature proteins. Capsid protein is auto-cleaved during polyprotein translation, unmasking a signal peptide at the N-terminus of the precursor of E3/E2. The remaining polyprotein is then targeted to the host endoplasmic reticulum, where host signal peptidase cleaves it into pE2, 6K and E1 proteins. pE2 is further processed to mature E3 and E2 by host furin in trans-Golgi vesicle. In terms of processing, phosphorylated on serine and threonine residues. Palmitoylated via thioester bonds. These palmitoylations may induce disruption of the C-terminus transmembrane. This would result in the reorientation of E2 C-terminus from lumenal to cytoplasmic side. Post-translationally, N-glycosylated. In terms of processing, palmitoylated via thioester bonds.

The protein localises to the virion. It is found in the host cytoplasm. Its subcellular location is the host cell membrane. The protein resides in the host nucleus. It localises to the virion membrane. The catalysed reaction is Autocatalytic release of the core protein from the N-terminus of the togavirus structural polyprotein by hydrolysis of a -Trp-|-Ser- bond.. Forms an icosahedral capsid with a T=4 symmetry composed of 240 copies of the capsid protein surrounded by a lipid membrane through which penetrate 80 spikes composed of trimers of E1-E2 heterodimers. The capsid protein binds to the viral RNA genome at a site adjacent to a ribosome binding site for viral genome translation following genome release. Possesses a protease activity that results in its autocatalytic cleavage from the nascent structural protein. Following its self-cleavage, the capsid protein transiently associates with ribosomes, and within several minutes the protein binds to viral RNA and rapidly assembles into icosahedric core particles. The resulting nucleocapsid eventually associates with the cytoplasmic domain of the spike glycoprotein E2 at the cell membrane, leading to budding and formation of mature virions. In case of infection, new virions attach to target cells and after clathrin-mediated endocytosis their membrane fuses with the host endosomal membrane. This leads to the release of the nucleocapsid into the cytoplasm, followed by an uncoating event necessary for the genomic RNA to become accessible. The uncoating might be triggered by the interaction of capsid proteins with ribosomes. Binding of ribosomes would release the genomic RNA since the same region is genomic RNA-binding and ribosome-binding. Specifically inhibits interleukin-1 receptor-associated kinase 1/IRAK1-dependent signaling during viral entry, representing a means by which the alphaviruses may evade innate immune detection and activation prior to viral gene expression. Inhibits host transcription. Forms a tetrameric complex with XPO1/CRM1 and the nuclear import receptor importin. This complex blocks the central channel of host nuclear pores thereby inhibiting the receptor-mediated nuclear transport and thus the host mRNA and rRNA transcription. The inhibition of transcription is linked to a cytopathic effect on the host cell. Functionally, provides the signal sequence for the translocation of the precursor of protein E3/E2 to the host endoplasmic reticulum. Furin-cleaved E3 remains associated with spike glycoprotein E1 and mediates pH protection of the latter during the transport via the secretory pathway. After virion release from the host cell, the assembly protein E3 is gradually released in the extracellular space. Its function is as follows. Plays a role in viral attachment to target host cell, by binding to the cell receptor. Synthesized as a p62 precursor which is processed by furin at the cell membrane just before virion budding, giving rise to E2-E1 heterodimer. The p62-E1 heterodimer is stable, whereas E2-E1 is unstable and dissociate at low pH. p62 is processed at the last step, presumably to avoid E1 fusion activation before its final export to cell surface. E2 C-terminus contains a transitory transmembrane that would be disrupted by palmitoylation, resulting in reorientation of the C-terminal tail from lumenal to cytoplasmic side. This step is critical since E2 C-terminus is involved in budding by interacting with capsid proteins. This release of E2 C-terminus in cytoplasm occurs lately in protein export, and precludes premature assembly of particles at the endoplasmic reticulum membrane. In terms of biological role, constitutive membrane protein involved in virus glycoprotein processing, cell permeabilization, and the budding of viral particles. Disrupts the calcium homeostasis of the cell, probably at the endoplasmic reticulum level. This leads to cytoplasmic calcium elevation. Because of its lipophilic properties, the 6K protein is postulated to influence the selection of lipids that interact with the transmembrane domains of the glycoproteins, which, in turn, affects the deformability of the bilayer required for the extreme curvature that occurs as budding proceeds. Present in low amount in virions, about 3% compared to viral glycoproteins. Class II viral fusion protein. Fusion activity is inactive as long as E1 is bound to E2 in mature virion. After virus attachment to target cell and endocytosis, acidification of the endosome would induce dissociation of E1/E2 heterodimer and concomitant trimerization of the E1 subunits. This E1 trimer is fusion active, and promotes release of viral nucleocapsid in cytoplasm after endosome and viral membrane fusion. Efficient fusion requires the presence of cholesterol and sphingolipid in the target membrane. Fusion is optimal at levels of about 1 molecule of cholesterol per 2 molecules of phospholipids, and is specific for sterols containing a 3-beta-hydroxyl group. This chain is Structural polyprotein, found in Aedes (Human).